The sequence spans 440 residues: Ribulose bisphosphate carboxylase large chain (440 aa).

N6,N6,N6-trimethyllysine is present on Lys-4. Substrate is bound by residues Asn-113 and Thr-163. Lys-165 acts as the Proton acceptor in catalysis. Lys-167 contacts substrate. Mg(2+)-binding residues include Lys-191, Asp-193, and Glu-194. N6-carboxylysine is present on Lys-191. Residue His-284 is the Proton acceptor of the active site. The substrate site is built by Arg-285, His-317, and Ser-369.

This sequence belongs to the RuBisCO large chain family. Type I subfamily. In terms of assembly, heterohexadecamer of 8 large chains and 8 small chains; disulfide-linked. The disulfide link is formed within the large subunit homodimers. Mg(2+) is required as a cofactor. Post-translationally, the disulfide bond which can form in the large chain dimeric partners within the hexadecamer appears to be associated with oxidative stress and protein turnover.

It localises to the plastid. Its subcellular location is the chloroplast. The enzyme catalyses 2 (2R)-3-phosphoglycerate + 2 H(+) = D-ribulose 1,5-bisphosphate + CO2 + H2O. It catalyses the reaction D-ribulose 1,5-bisphosphate + O2 = 2-phosphoglycolate + (2R)-3-phosphoglycerate + 2 H(+). In terms of biological role, ruBisCO catalyzes two reactions: the carboxylation of D-ribulose 1,5-bisphosphate, the primary event in carbon dioxide fixation, as well as the oxidative fragmentation of the pentose substrate in the photorespiration process. Both reactions occur simultaneously and in competition at the same active site. The polypeptide is Ribulose bisphosphate carboxylase large chain (Ptychomitrium gardneri (Gardner's ptychomitrium moss)).